Here is a 372-residue protein sequence, read N- to C-terminus: MAHAPARCPSARGSGDGEMGKPRNVALITGITGQDGSYLAEFLLEKGYEVHGIVRRSSSFNTGRIEHLYKNPQAHIEGNMKLHYGDLTDSTCLVKIINEVKPTEIYNLGAQSHVKISFDLAEYTADVDGVGTLRLLDAVKTCGLINSVKFYQASTSELYGKVQEIPQKETTPFYPRSPYGAAKLYAYWIVVNFREAYNLFAVNGILFNHESPRRGANFVTRKISRSVAKIYLGQLECFSLGNLDAKRDWGHAKDYVEAMWLMLQNDEPEDFVIATGEVHSVREFVEKSFLHIGKTIVWEGKNENEVGRCKETGKVHVTVDLKYYRPTEVDFLQGDCTKAKQKLNWKPRVAFDELVREMVHADVELMRTNPNA.

The tract at residues 1 to 20 (MAHAPARCPSARGSGDGEMG) is disordered. Alanine 2 carries the post-translational modification N-acetylalanine. Residues 30–35 (GITGQD), 55–58 (RRSS), 86–87 (DL), 108–112 (LGAQS), and tyrosine 123 each bind NADP(+). The active site involves threonine 155. Active-site nucleophile residues include glutamate 157 and tyrosine 179. Residues lysine 183, histidine 209, and arginine 214 each coordinate NADP(+). Tyrosine 323 is subject to Phosphotyrosine.

The protein belongs to the NAD(P)-dependent epimerase/dehydratase family. GDP-mannose 4,6-dehydratase subfamily. The cofactor is NADP(+). Highly expressed in pancreas and small intestine. Expressed in thymus, protstate, colon, heart, placenta, liver and kidney. Expressed at low levels in spleen, testis, brain and lung.

It catalyses the reaction GDP-alpha-D-mannose = GDP-4-dehydro-alpha-D-rhamnose + H2O. It functions in the pathway nucleotide-sugar biosynthesis; GDP-L-fucose biosynthesis via de novo pathway; GDP-L-fucose from GDP-alpha-D-mannose: step 1/2. With respect to regulation, inhibited by GDP-fucose. In terms of biological role, catalyzes the conversion of GDP-D-mannose to GDP-4-dehydro-6-deoxy-D-mannose. This chain is GDP-mannose 4,6 dehydratase, found in Homo sapiens (Human).